Consider the following 244-residue polypeptide: UPF0173 metal-dependent hydrolase RoseRS_3945 (244 aa).

Belongs to the UPF0173 family.

This Roseiflexus sp. (strain RS-1) protein is UPF0173 metal-dependent hydrolase RoseRS_3945.